A 145-amino-acid polypeptide reads, in one-letter code: D-aminoacyl-tRNA deacylase (145 aa).

A Gly-cisPro motif, important for rejection of L-amino acids motif is present at residues 137 to 138 (GP).

Belongs to the DTD family. As to quaternary structure, homodimer.

Its subcellular location is the cytoplasm. The enzyme catalyses glycyl-tRNA(Ala) + H2O = tRNA(Ala) + glycine + H(+). It carries out the reaction a D-aminoacyl-tRNA + H2O = a tRNA + a D-alpha-amino acid + H(+). An aminoacyl-tRNA editing enzyme that deacylates mischarged D-aminoacyl-tRNAs. Also deacylates mischarged glycyl-tRNA(Ala), protecting cells against glycine mischarging by AlaRS. Acts via tRNA-based rather than protein-based catalysis; rejects L-amino acids rather than detecting D-amino acids in the active site. By recycling D-aminoacyl-tRNA to D-amino acids and free tRNA molecules, this enzyme counteracts the toxicity associated with the formation of D-aminoacyl-tRNA entities in vivo and helps enforce protein L-homochirality. In Rhodococcus opacus (strain B4), this protein is D-aminoacyl-tRNA deacylase.